A 133-amino-acid chain; its full sequence is Small ribosomal subunit protein uS8c (133 aa).

Belongs to the universal ribosomal protein uS8 family. As to quaternary structure, part of the 30S ribosomal subunit.

It localises to the plastid. The protein localises to the chloroplast. One of the primary rRNA binding proteins, it binds directly to 16S rRNA central domain where it helps coordinate assembly of the platform of the 30S subunit. This chain is Small ribosomal subunit protein uS8c (rps8), found in Chlorokybus atmophyticus (Soil alga).